Consider the following 200-residue polypeptide: Protein GrpE (200 aa).

It belongs to the GrpE family. In terms of assembly, homodimer.

It is found in the cytoplasm. Participates actively in the response to hyperosmotic and heat shock by preventing the aggregation of stress-denatured proteins, in association with DnaK and GrpE. It is the nucleotide exchange factor for DnaK and may function as a thermosensor. Unfolded proteins bind initially to DnaJ; upon interaction with the DnaJ-bound protein, DnaK hydrolyzes its bound ATP, resulting in the formation of a stable complex. GrpE releases ADP from DnaK; ATP binding to DnaK triggers the release of the substrate protein, thus completing the reaction cycle. Several rounds of ATP-dependent interactions between DnaJ, DnaK and GrpE are required for fully efficient folding. This is Protein GrpE from Mycoplasma mycoides subsp. mycoides SC (strain CCUG 32753 / NCTC 10114 / PG1).